The following is a 197-amino-acid chain: Protein lin-7 homolog C (197 aa).

Residue Ala-2 is modified to N-acetylalanine. Positions 2–13 (AALGEPVRLERD) match the Kinase interacting site motif. Residues 10-65 (LERDICRAIELLEKLQRSGEVPPQKLQALQRVLQSEFCNAVREVYEHVYETVDISS) form the L27 domain. The PDZ domain maps to 93–175 (VVELPKTEEG…KVKLVVRYTP (83 aa)).

Belongs to the lin-7 family. As to quaternary structure, forms a complex with CASK and APBA1 or CASKIN1. Component of the brain-specific heterotrimeric complex (LIN-10-LIN-2-LIN-7 complex) composed of at least APBA1, CASK, and LIN7, which associates with the motor protein KIF17 to transport vesicles along microtubules. Can also interact with other modular proteins containing protein-protein interaction domains like PALS1, PALS2, MPP7, DLG1, DLG2 and DLG3 through its L27 domain. Interacts with DLG4 and GRIN2B as well as CDH1 and CTNNB1, the channels KCNJ12/Kir2.2, KCNJ4/Kir2.3 and probably KCNJ2/Kir2.1 and SLC6A12/BGT-1 via its PDZ domain. The association of LIN7A with cadherin and beta-catenin is calcium-dependent, occurs at synaptic junctions and requires the actin cytoskeleton. Interacts with EGFR, ERBB2, ERBB3 and ERBB4 with both PDZ and KID domains. Associates with KIF17 via APBA1. Interacts with HTR4. Forms a tripartite complex composed of DLG1, MPP7 and LIN7 (LIN7A or LIN7C). Interacts with MAPK12.

It is found in the cell membrane. The protein localises to the basolateral cell membrane. The protein resides in the cell junction. It localises to the postsynaptic density membrane. Its subcellular location is the tight junction. It is found in the synapse. The protein localises to the synaptosome. Its function is as follows. Plays a role in establishing and maintaining the asymmetric distribution of channels and receptors at the plasma membrane of polarized cells. Forms membrane-associated multiprotein complexes that may regulate delivery and recycling of proteins to the correct membrane domains. The tripartite complex composed of LIN7 (LIN7A, LIN7B or LIN7C), CASK and APBA1 associates with the motor protein KIF17 to transport vesicles containing N-methyl-D-aspartate (NMDA) receptor subunit NR2B along microtubules. This complex may have the potential to couple synaptic vesicle exocytosis to cell adhesion in brain. Ensures the proper localization of GRIN2B (subunit 2B of the NMDA receptor) to neuronal postsynaptic density and may function in localizing synaptic vesicles at synapses where it is recruited by beta-catenin and cadherin. Required to localize Kir2 channels, GABA transporter (SLC6A12) and EGFR/ERBB1, ERBB2, ERBB3 and ERBB4 to the basolateral membrane of epithelial cells. This chain is Protein lin-7 homolog C (LIN7C), found in Bos taurus (Bovine).